Consider the following 255-residue polypeptide: F-box only protein 44 (255 aa).

The F-box domain maps to 3 to 50; it reads VGNINELPENILLELFTHVPARQLLLNCRLVCSLWRDLIDLVTLWKRK. The 182-residue stretch at 71 to 252 folds into the FBA domain; that stretch reads FYFLRSLHRN…VTNSSITIGP (182 aa).

In terms of assembly, part of a SCF (SKP1-cullin-F-box) protein ligase complex. Interacts with SKP1 and CUL1. In terms of tissue distribution, abundantly expressed in brain and kidney. Expressed at lower levels in heart, spleen and liver.

Its function is as follows. Substrate-recognition component of the SCF (SKP1-CUL1-F-box protein)-type E3 ubiquitin ligase complex. This is F-box only protein 44 (FBXO44) from Homo sapiens (Human).